The following is a 304-amino-acid chain: MTENTKTHVILLSCGSFNPITKGHIHMFEKAREYLHKTGRFIVIGGIVSPVHDSYGKPGLVPSRHRLTMCQLAVQSSDWIRVDPWECYQDTWQTTCSVLEHHRDLMKRVTGCILSNVNTPSTTPVIGQPQNETSAIYQNTVNKSVAIKFWGKMSESLGKICCVRPHMDRFTFVDENANLGTAMRYEEIELRILLLCGSDLLESFCIPGLWNESDMEVIVGDFGIVVVPRDGADTERIMNHSSVLRKHKDNIIVVKDEIDHPMSIVSSTKSRLALQHGDGHVVDYLSQPVIDYILQSQLYINASG.

NAD(+) contacts are provided by serine 16 and phenylalanine 17. Histidine 24 provides a ligand contact to ATP. 2 residues coordinate NAD(+): tryptophan 92 and threonine 95. 2 S-palmitoyl cysteine lipidation sites follow: cysteine 161 and cysteine 162. NAD(+)-binding residues include glycine 197, aspartate 199, leucine 209, tryptophan 210, and arginine 229. 268-271 (TKSR) serves as a coordination point for ATP.

It belongs to the eukaryotic NMN adenylyltransferase family. Monomer. The cofactor is Mg(2+).

It is found in the golgi apparatus membrane. Its subcellular location is the cytoplasmic vesicle membrane. It localises to the cytoplasm. The protein localises to the cell projection. The protein resides in the axon. It catalyses the reaction beta-nicotinamide D-ribonucleotide + ATP + H(+) = diphosphate + NAD(+). The enzyme catalyses nicotinate beta-D-ribonucleotide + ATP + H(+) = deamido-NAD(+) + diphosphate. It participates in cofactor biosynthesis; NAD(+) biosynthesis; NAD(+) from nicotinamide D-ribonucleotide: step 1/1. The protein operates within cofactor biosynthesis; NAD(+) biosynthesis; deamido-NAD(+) from nicotinate D-ribonucleotide: step 1/1. Nicotinamide/nicotinate-nucleotide adenylyltransferase that acts as an axon maintenance factor. Axon survival factor required for the maintenance of healthy axons: acts by delaying Wallerian axon degeneration, an evolutionarily conserved process that drives the loss of damaged axons. Catalyzes the formation of NAD(+) from nicotinamide mononucleotide (NMN) and ATP. Can also use the deamidated form; nicotinic acid mononucleotide (NaMN) as substrate but with a lower efficiency. Also catalyzes the reverse reaction, i.e. the pyrophosphorolytic cleavage of NAD(+). For the pyrophosphorolytic activity prefers NAD(+), NADH and NaAD as substrates and degrades nicotinic acid adenine dinucleotide phosphate (NHD) less effectively. Also acts as an activator of ADP-ribosylation by supporting the catalytic activity of PARP16 and promoting mono-ADP-ribosylation of ribosomes by PARP16. May be involved in the maintenance of axonal integrity. This is Nicotinamide/nicotinic acid mononucleotide adenylyltransferase 2 (nmnat2) from Danio rerio (Zebrafish).